The chain runs to 545 residues: DnaJ homolog subfamily C member 21 (545 aa).

The J domain maps to Cys-3–Arg-69. 4 disordered regions span residues Glu-122–Glu-141, Glu-276–Val-302, Ser-331–Asn-497, and His-522–Arg-545. Acidic residues-rich tracts occupy residues Glu-129 to Glu-141 and Asp-283 to Glu-295. Residues Arg-180 to Asp-286 are a coiled coil. The C2H2-type 1 zinc finger occupies Leu-323–His-347. The segment covering Lys-339–Arg-348 has biased composition (basic residues). Over residues Arg-372 to Asn-388 the composition is skewed to acidic residues. The segment covering Lys-394 to Gln-406 has biased composition (basic residues). The segment at Leu-498 to His-522 adopts a C2H2-type 2 zinc-finger fold. Over residues Ser-535–Arg-545 the composition is skewed to basic residues.

In terms of biological role, may act as a co-chaperone for HSP70. In Danio rerio (Zebrafish), this protein is DnaJ homolog subfamily C member 21 (dnajc21).